A 160-amino-acid polypeptide reads, in one-letter code: Protein-export protein SecB (160 aa).

This sequence belongs to the SecB family. Homotetramer, a dimer of dimers. One homotetramer interacts with 1 SecA dimer.

Its subcellular location is the cytoplasm. In terms of biological role, one of the proteins required for the normal export of preproteins out of the cell cytoplasm. It is a molecular chaperone that binds to a subset of precursor proteins, maintaining them in a translocation-competent state. It also specifically binds to its receptor SecA. The chain is Protein-export protein SecB from Rhodospirillum rubrum (strain ATCC 11170 / ATH 1.1.1 / DSM 467 / LMG 4362 / NCIMB 8255 / S1).